We begin with the raw amino-acid sequence, 201 residues long: 3-isopropylmalate dehydratase small subunit (201 aa).

Belongs to the LeuD family. LeuD type 1 subfamily. As to quaternary structure, heterodimer of LeuC and LeuD.

The catalysed reaction is (2R,3S)-3-isopropylmalate = (2S)-2-isopropylmalate. Its pathway is amino-acid biosynthesis; L-leucine biosynthesis; L-leucine from 3-methyl-2-oxobutanoate: step 2/4. In terms of biological role, catalyzes the isomerization between 2-isopropylmalate and 3-isopropylmalate, via the formation of 2-isopropylmaleate. The sequence is that of 3-isopropylmalate dehydratase small subunit from Shewanella baltica (strain OS155 / ATCC BAA-1091).